The primary structure comprises 1030 residues: Zinc finger and SCAN domain-containing protein 20 (1030 aa).

The interval 22–42 (DSWGSDSRPEKESHSPVPGPE) is disordered. The SCAN box domain occupies 45–127 (RRCFRQFRYR…ALVEDWHREA (83 aa)). Disordered stretches follow at residues 178–201 (DLSKMPPESLKESAVLTPQAPTVP), 213–285 (GKSQ…DSAQ), 411–441 (SGGPGEAVALPRLGDSDTEMDDQDEGSWEPE), and 578–600 (TGLPGSGQSSTEADDQEAWGEME). Over residues 225-240 (AKKEPCQDPAGGDRGD) the composition is skewed to basic and acidic residues. Composition is skewed to acidic residues over residues 426–441 (SDTEMDDQDEGSWEPE) and 589–600 (EADDQEAWGEME). The C2H2-type 1; degenerate zinc finger occupies 697–719 (YGCDTRAKSFSRKVHFFAPQRTH). A C2H2-type 2; degenerate zinc finger spans residues 725-747 (YKCLGSGKSFSDRANLSTHQRIH). 2 consecutive C2H2-type zinc fingers follow at residues 753-775 (YRCLECGKSFNDPSNLITHQRTH) and 781-803 (YKCGLCWKSFNQSSNLLKHQRVH). Disordered regions lie at residues 801-820 (RVHLGGPPNQRDEPGENFGQ) and 828-850 (WRRNSTQEGPKEPQNISMGADSP). C2H2-type zinc fingers lie at residues 862–884 (YSCPECGRCFSKSSALTSHQRIH), 890–912 (YECAVCGKSFSKSSSLANHRRTH), 918–940 (HKCADCGKCFSERSKLITHQRVH), 946–968 (YECPECGKFFRDRSNLITHQRIH), 974–996 (YKCRECGKCFNQSSSLIIHQRIH), and 1002–1024 (YKCTECGKDFNNSSHFSAHRRTH).

Belongs to the krueppel C2H2-type zinc-finger protein family.

It localises to the nucleus. Functionally, may be involved in transcriptional regulation. The protein is Zinc finger and SCAN domain-containing protein 20 (Zscan20) of Mus musculus (Mouse).